We begin with the raw amino-acid sequence, 340 residues long: Heat-inducible transcription repressor HrcA (340 aa).

It belongs to the HrcA family.

Negative regulator of class I heat shock genes (grpE-dnaK-dnaJ and groELS operons). Prevents heat-shock induction of these operons. The chain is Heat-inducible transcription repressor HrcA from Burkholderia cenocepacia (strain ATCC BAA-245 / DSM 16553 / LMG 16656 / NCTC 13227 / J2315 / CF5610) (Burkholderia cepacia (strain J2315)).